Consider the following 729-residue polypeptide: Translation initiation factor IF-2 (729 aa).

The interval 20 to 141 (QFAGGGRGPG…TTTVRAPVRP (122 aa)) is disordered. Over residues 22–91 (AGGGRGPGNP…PGGGRGGGRG (70 aa)) the composition is skewed to gly residues. A compositionally biased stretch (basic and acidic residues) spans 92–108 (GDGRRRDESFVENEGGR). Over residues 112–127 (SGRTTSTATTARTPGG) the composition is skewed to low complexity. Residues 229–396 (PRPPVVTIMG…IILLVADLNE (168 aa)) enclose the tr-type G domain. Positions 238–245 (GHVDHGKT) are G1. GTP is bound at residue 238–245 (GHVDHGKT). Residues 263–267 (GITQH) form a G2 region. The tract at residues 284 to 287 (DTPG) is G3. Residues 284–288 (DTPGH) and 338–341 (NKID) each bind GTP. A G4 region spans residues 338–341 (NKID). The tract at residues 374 to 376 (SAK) is G5.

The protein belongs to the TRAFAC class translation factor GTPase superfamily. Classic translation factor GTPase family. IF-2 subfamily.

It is found in the cytoplasm. Its function is as follows. One of the essential components for the initiation of protein synthesis. Protects formylmethionyl-tRNA from spontaneous hydrolysis and promotes its binding to the 30S ribosomal subunits. Also involved in the hydrolysis of GTP during the formation of the 70S ribosomal complex. The protein is Translation initiation factor IF-2 of Roseiflexus sp. (strain RS-1).